A 1435-amino-acid polypeptide reads, in one-letter code: Putative ATP-dependent RNA helicase YLR419W (1435 aa).

2 disordered regions span residues 1-57 (MAKK…STAS) and 226-251 (LSSH…KNSH). Residue Ser-9 is modified to Phosphoserine. The span at 31 to 43 (KGQEPEPEDDKRA) shows a compositional bias: basic and acidic residues. The segment covering 45 to 57 (QQSNRAKVTSTAS) has biased composition (polar residues). The UBA domain occupies 365–406 (PLSTRMIVERLTEIGVSSDEALLALQQNDMNENEAAGFLTRE). An RWD domain is found at 430–531 (QELESLESIY…EWLKENISKI (102 aa)). The tract at residues 543 to 566 (DSKGAINKRNISNGKRSINNSSSR) is disordered. Polar residues predominate over residues 551–566 (RNISNGKRSINNSSSR). The region spanning 614-782 (IDIINKNEVV…FPGLATCHIE (169 aa)) is the Helicase ATP-binding domain. An ATP-binding site is contributed by 627-634 (GETGSGKS). Positions 729–732 (DEVH) match the DEAH box motif. Ser-816 is modified (phosphoserine). A Helicase C-terminal domain is found at 845–1020 (LLCQVVEYVH…SLYLSVKAMG (176 aa)).

Belongs to the DEAD box helicase family. DEAH subfamily.

The protein localises to the cytoplasm. It carries out the reaction ATP + H2O = ADP + phosphate + H(+). Its function is as follows. Probable ATP-binding RNA helicase. The polypeptide is Putative ATP-dependent RNA helicase YLR419W (Saccharomyces cerevisiae (strain ATCC 204508 / S288c) (Baker's yeast)).